The following is a 521-amino-acid chain: Bifunctional purine biosynthesis protein PurH (521 aa).

One can recognise an MGS-like domain in the interval 1–147 (MAKISRALIS…KNNADVTVLV (147 aa)).

Belongs to the PurH family.

The enzyme catalyses (6R)-10-formyltetrahydrofolate + 5-amino-1-(5-phospho-beta-D-ribosyl)imidazole-4-carboxamide = 5-formamido-1-(5-phospho-D-ribosyl)imidazole-4-carboxamide + (6S)-5,6,7,8-tetrahydrofolate. It catalyses the reaction IMP + H2O = 5-formamido-1-(5-phospho-D-ribosyl)imidazole-4-carboxamide. The protein operates within purine metabolism; IMP biosynthesis via de novo pathway; 5-formamido-1-(5-phospho-D-ribosyl)imidazole-4-carboxamide from 5-amino-1-(5-phospho-D-ribosyl)imidazole-4-carboxamide (10-formyl THF route): step 1/1. It participates in purine metabolism; IMP biosynthesis via de novo pathway; IMP from 5-formamido-1-(5-phospho-D-ribosyl)imidazole-4-carboxamide: step 1/1. The polypeptide is Bifunctional purine biosynthesis protein PurH (Geotalea daltonii (strain DSM 22248 / JCM 15807 / FRC-32) (Geobacter daltonii)).